We begin with the raw amino-acid sequence, 328 residues long: Gonadotropin-releasing hormone receptor (328 aa).

At 1 to 38 (MANSASPEQNQNHCSAINNSIPLMQGNLPTLTLSGKIR) the chain is on the extracellular side. N-linked (GlcNAc...) asparagine glycosylation occurs at Asn18. Residues 39–58 (VTVTFFLFLLSATFNASFLL) traverse the membrane as a helical segment. Topologically, residues 59–77 (KLQKWTQKKEKGKKLSRMK) are cytoplasmic. A helical membrane pass occupies residues 78–97 (LLLKHLTLANLLETLIVMPL). Topologically, residues 98–115 (DGMWNITVQWYAGELLCK) are extracellular. An N-linked (GlcNAc...) asparagine glycan is attached at Asn102. An intrachain disulfide couples Cys114 to Cys196. The helical transmembrane segment at 116–137 (VLSYLKLFSMYAPAFMMVVISL) threads the bilayer. Residues 138–164 (DRSLAITRPLALKSNSKVGQSMVGLAW) lie on the Cytoplasmic side of the membrane. A helical membrane pass occupies residues 165–184 (ILSSVFAGPQLYIFRMIHLA). The Extracellular segment spans residues 185–212 (DSSGQTKVFSQCVTHCSFSQWWHQAFYN). A helical membrane pass occupies residues 213-232 (FFTFSCLFIIPLFIMLICNA). Residues 233–281 (KIIFTLTRVLHQDPHELQLNQSKNNIPRARLKTLKMTVAFATSFTVCWT) are Cytoplasmic-facing. The chain crosses the membrane as a helical span at residues 282-300 (PYYVLGIWYWFDPEMLNRL). Residues 301 to 306 (SDPVNH) lie on the Extracellular side of the membrane. The chain crosses the membrane as a helical span at residues 307 to 326 (FFFLFAFLNPCFDPLIYGYF). Over 327 to 328 (SL) the chain is Cytoplasmic.

Belongs to the G-protein coupled receptor 1 family. Pituitary, ovary, testis, breast and prostate but not in liver and spleen.

The protein localises to the cell membrane. Its function is as follows. Receptor for gonadotropin releasing hormone (GnRH) that mediates the action of GnRH to stimulate the secretion of the gonadotropic hormones luteinizing hormone (LH) and follicle-stimulating hormone (FSH). This receptor mediates its action by association with G-proteins that activate a phosphatidylinositol-calcium second messenger system. Isoform 2 may act as an inhibitor of GnRH-R signaling. In Homo sapiens (Human), this protein is Gonadotropin-releasing hormone receptor (GNRHR).